A 151-amino-acid chain; its full sequence is MPKYTAVNYLIYLLSKRDYSEYDLRNKLIQKQYDTDEIEHAIQQAQLNNWQNDERYCASFIRYRSQQGIGPRRLKQELRLKGIKDYLISEQLQNTEIDWFSLAELLFEKKRPLDWNIKVKQKMWRFMLSRGFYNEHFSHLMDLEEVSKEYE.

It belongs to the RecX family.

Its subcellular location is the cytoplasm. Its function is as follows. Modulates RecA activity. This is Regulatory protein RecX from Haemophilus ducreyi (strain 35000HP / ATCC 700724).